The sequence spans 134 residues: ATP synthase epsilon chain (134 aa).

This sequence belongs to the ATPase epsilon chain family. In terms of assembly, F-type ATPases have 2 components, CF(1) - the catalytic core - and CF(0) - the membrane proton channel. CF(1) has five subunits: alpha(3), beta(3), gamma(1), delta(1), epsilon(1). CF(0) has three main subunits: a, b and c.

It localises to the cell inner membrane. Functionally, produces ATP from ADP in the presence of a proton gradient across the membrane. This chain is ATP synthase epsilon chain, found in Nitratidesulfovibrio vulgaris (strain ATCC 29579 / DSM 644 / CCUG 34227 / NCIMB 8303 / VKM B-1760 / Hildenborough) (Desulfovibrio vulgaris).